Consider the following 378-residue polypeptide: Erythronate-4-phosphate dehydrogenase (378 aa).

2 residues coordinate substrate: Ser45 and Thr66. Asp146 and Thr175 together coordinate NAD(+). Arg208 is an active-site residue. Asp232 provides a ligand contact to NAD(+). The active site involves Glu237. The active-site Proton donor is the His254. Residue Gly257 participates in NAD(+) binding. Tyr258 contributes to the substrate binding site.

The protein belongs to the D-isomer specific 2-hydroxyacid dehydrogenase family. PdxB subfamily. Homodimer.

The protein resides in the cytoplasm. It carries out the reaction 4-phospho-D-erythronate + NAD(+) = (R)-3-hydroxy-2-oxo-4-phosphooxybutanoate + NADH + H(+). It functions in the pathway cofactor biosynthesis; pyridoxine 5'-phosphate biosynthesis; pyridoxine 5'-phosphate from D-erythrose 4-phosphate: step 2/5. Its function is as follows. Catalyzes the oxidation of erythronate-4-phosphate to 3-hydroxy-2-oxo-4-phosphonooxybutanoate. The sequence is that of Erythronate-4-phosphate dehydrogenase from Escherichia coli O127:H6 (strain E2348/69 / EPEC).